The sequence spans 90 residues: Barrier-to-autointegration factor A (90 aa).

The protein belongs to the BAF family. Homodimer. Interacts with nemp1a and nemp1b. In terms of processing, phosphorylated during S and M phases.

The protein resides in the nucleus. It localises to the chromosome. It is found in the nucleus envelope. The protein localises to the cytoplasm. Non-specific DNA-binding protein that plays key roles in mitotic nuclear reassembly, chromatin organization, DNA damage response, gene expression and intrinsic immunity against foreign DNA. Contains two non-specific double-stranded DNA (dsDNA)-binding sites which promote DNA cross-bridging. Plays a key role in nuclear membrane reformation at the end of mitosis by driving formation of a single nucleus in a spindle-independent manner. Transiently cross-bridges anaphase chromosomes via its ability to bridge distant DNA sites, leading to the formation of a dense chromatin network at the chromosome ensemble surface that limits membranes to the surface. Also acts as a negative regulator of innate immune activation by restricting CGAS activity toward self-DNA upon acute loss of nuclear membrane integrity. Outcompetes CGAS for DNA-binding, thereby preventing CGAS activation and subsequent damaging autoinflammatory responses. Also involved in DNA damage response; acts by inhibiting the ADP-ribosyltransferase activity of PARP1. Involved in the recognition of exogenous dsDNA in the cytosol: associates with exogenous dsDNA immediately after its appearance in the cytosol at endosome breakdown and is required to avoid autophagy. This Xenopus laevis (African clawed frog) protein is Barrier-to-autointegration factor A (banf1-a).